The chain runs to 430 residues: MTSVVVVGTQWGDEGKGKITDFLSADAEVIARYQGGDNAGHTIVIDGKKFKLHLIPSGIFFPQKISVIGNGVVVNPKSLVKELAYLHDEGVTTDNLRISDRAHVILPYHIQLDQLQEDAKGDNKIGTTIKGIGPAYMDKAARVGIRIADLLDKDIFAERLRINLAEKNRLFEKMYDSTPLDFDAIFEEYYAYGQEIKQYVTDTSVILNDALDAGKRVLFEGAQGVMLDIDQGTYPFVTSSNPVAGGVTIGSGVGPSKINKVVGVCKAYTSRVGDGPFPTELFDEVGERIREVGHEYGTTTGRPRRVGWFDSVVMRHSRRVSGITNLSLNSIDVLSGLDTVKICVAYDLDRKRIDYYPASLEQLKRCKPIYEELPGWQEDITGVRSLDELPENARNYVRRVGELVGVRISTFSVGPGREQTNILESVWASI.

Residues 12–18 and 40–42 each bind GTP; these read GDEGKGK and GHT. Aspartate 13 serves as the catalytic Proton acceptor. Mg(2+) is bound by residues aspartate 13 and glycine 40. Residues 13–16, 38–41, threonine 128, arginine 142, glutamine 223, threonine 238, and arginine 302 each bind IMP; these read DEGK and NAGH. The active-site Proton donor is the histidine 41. 298-304 serves as a coordination point for substrate; that stretch reads TTTGRPR. Residues arginine 304, 330–332, and 412–414 each bind GTP; these read SID and SVG.

It belongs to the adenylosuccinate synthetase family. As to quaternary structure, homodimer. Mg(2+) is required as a cofactor.

Its subcellular location is the cytoplasm. It carries out the reaction IMP + L-aspartate + GTP = N(6)-(1,2-dicarboxyethyl)-AMP + GDP + phosphate + 2 H(+). Its pathway is purine metabolism; AMP biosynthesis via de novo pathway; AMP from IMP: step 1/2. Its function is as follows. Plays an important role in the de novo pathway of purine nucleotide biosynthesis. Catalyzes the first committed step in the biosynthesis of AMP from IMP. In Streptococcus pyogenes serotype M5 (strain Manfredo), this protein is Adenylosuccinate synthetase.